The primary structure comprises 339 residues: DNA-directed RNA polymerase subunit alpha (339 aa).

Residues 1-235 (MVLQKNWQSL…DQLQLFINFD (235 aa)) are alpha N-terminal domain (alpha-NTD). The tract at residues 251–339 (FNRNLLRKVD…DLAKRLDEPF (89 aa)) is alpha C-terminal domain (alpha-CTD).

The protein belongs to the RNA polymerase alpha chain family. In terms of assembly, homodimer. The RNAP catalytic core consists of 2 alpha, 1 beta, 1 beta' and 1 omega subunit. When a sigma factor is associated with the core the holoenzyme is formed, which can initiate transcription.

The enzyme catalyses RNA(n) + a ribonucleoside 5'-triphosphate = RNA(n+1) + diphosphate. DNA-dependent RNA polymerase catalyzes the transcription of DNA into RNA using the four ribonucleoside triphosphates as substrates. This is DNA-directed RNA polymerase subunit alpha from Gluconacetobacter diazotrophicus (strain ATCC 49037 / DSM 5601 / CCUG 37298 / CIP 103539 / LMG 7603 / PAl5).